Here is a 237-residue protein sequence, read N- to C-terminus: LexA repressor (237 aa).

The H-T-H motif DNA-binding region spans 26–46 (FDEMKEALDLRSKSGIHRLIT). Catalysis depends on for autocatalytic cleavage activity residues S158 and K196.

This sequence belongs to the peptidase S24 family. Homodimer.

It catalyses the reaction Hydrolysis of Ala-|-Gly bond in repressor LexA.. Functionally, represses a number of genes involved in the response to DNA damage (SOS response), including recA and lexA. In the presence of single-stranded DNA, RecA interacts with LexA causing an autocatalytic cleavage which disrupts the DNA-binding part of LexA, leading to derepression of the SOS regulon and eventually DNA repair. This is LexA repressor from Xanthobacter autotrophicus (strain ATCC BAA-1158 / Py2).